The following is a 354-amino-acid chain: Putative [LysW]-L-2-aminoadipate/[LysW]-L-glutamate phosphate reductase (354 aa).

NADP(+) contacts are provided by residues 10–13 and 34–36; these read SGVI and SRR. The active site involves Cys153. Asn321 contacts NADP(+).

The protein belongs to the NAGSA dehydrogenase family. Type 1 subfamily. LysY sub-subfamily.

The protein resides in the cytoplasm. The enzyme catalyses [amino-group carrier protein]-C-terminal-N-(1-carboxy-5-oxopentan-1-yl)-L-glutamine + phosphate + NADP(+) = [amino-group carrier protein]-C-terminal-N-(1-carboxy-5-phosphooxy-5-oxopentan-1-yl)-L-glutamine + NADPH + H(+). It carries out the reaction [amino-group carrier protein]-C-terminal-gamma-(L-glutamyl-5-semialdehyde)-L-glutamate + phosphate + NADP(+) = [amino-group carrier protein]-C-terminal-gamma-(5-phospho-L-glutamyl)-L-glutamate + NADPH + H(+). It participates in amino-acid biosynthesis; L-lysine biosynthesis via AAA pathway; L-lysine from L-alpha-aminoadipate (Thermus route): step 3/5. It functions in the pathway amino-acid biosynthesis; L-arginine biosynthesis. Its function is as follows. Involved in both the arginine and lysine biosynthetic pathways. This chain is Putative [LysW]-L-2-aminoadipate/[LysW]-L-glutamate phosphate reductase, found in Caldivirga maquilingensis (strain ATCC 700844 / DSM 13496 / JCM 10307 / IC-167).